Here is a 72-residue protein sequence, read N- to C-terminus: Exodeoxyribonuclease 7 small subunit (72 aa).

It belongs to the XseB family. In terms of assembly, heterooligomer composed of large and small subunits.

It is found in the cytoplasm. It catalyses the reaction Exonucleolytic cleavage in either 5'- to 3'- or 3'- to 5'-direction to yield nucleoside 5'-phosphates.. Functionally, bidirectionally degrades single-stranded DNA into large acid-insoluble oligonucleotides, which are then degraded further into small acid-soluble oligonucleotides. The sequence is that of Exodeoxyribonuclease 7 small subunit from Chlamydia trachomatis serovar A (strain ATCC VR-571B / DSM 19440 / HAR-13).